The chain runs to 349 residues: Biotin synthase (349 aa).

The Radical SAM core domain occupies 70-295 (PEVEVEGIIS…RTMLRFAGGR (226 aa)). [4Fe-4S] cluster contacts are provided by C85, C89, and C92. Positions 128, 161, 220, and 290 each coordinate [2Fe-2S] cluster.

This sequence belongs to the radical SAM superfamily. Biotin synthase family. Homodimer. [4Fe-4S] cluster serves as cofactor. The cofactor is [2Fe-2S] cluster.

The catalysed reaction is (4R,5S)-dethiobiotin + (sulfur carrier)-SH + 2 reduced [2Fe-2S]-[ferredoxin] + 2 S-adenosyl-L-methionine = (sulfur carrier)-H + biotin + 2 5'-deoxyadenosine + 2 L-methionine + 2 oxidized [2Fe-2S]-[ferredoxin]. The protein operates within cofactor biosynthesis; biotin biosynthesis; biotin from 7,8-diaminononanoate: step 2/2. In terms of biological role, catalyzes the conversion of dethiobiotin (DTB) to biotin by the insertion of a sulfur atom into dethiobiotin via a radical-based mechanism. The protein is Biotin synthase of Mycobacterium bovis (strain ATCC BAA-935 / AF2122/97).